Reading from the N-terminus, the 573-residue chain is MSRVLSRRDIADRIAKGQTIVIYEDSVLNLDKWIKFHPGGDKSIYHMIGRDATDEMNAYHDDQTITKFKIWKIGRIDYPWENMLPPIQGGRFSKIDERDDIGDYDINLTSKWRSVDESNQYTKIPKNDRLASEAEVKIYPKIPQGVVPSLDLKEAYEKKIVVDPAIVSENYDNERVYEDLTNFPSLDVKNQEWIASEYRKLHGEITAAGLYQCNYVRYLREFLRIGTLFGISFYLLSLKWFAISAICLGFAWQQLVFIAHDAGHISITHNYQVDNIIGMTVASWIGGLSLGWWKRNHDVHHLVTNDPVHDPDIQHLPFFAVSTRLFHNVYSTYYDKFLWFDKFAQKVVPIQHYLYYPILCFGRFNLYRLSWMHVLLGQGPRRGKAAWFRYYELAELSFFNYWFFYLIIYKQMPTNAERFKYVMISHIATMIVHVQITLSHFAMSTSDLGVTESFPMRQLRTSMDVDCPRWLDFFHGGLQFQVIHHLFPRLPRHNLKDAQSLVIKFCDKVGIKYSIYGFAAGNDVVISHLQQIAQQAHTMLECAKTMKKEATDTEFHTNKHVLAANVNEKRKQE.

The Cytochrome b5 heme-binding domain maps to 2–77 (SRVLSRRDIA…FKIWKIGRID (76 aa)). H37 and H60 together coordinate heme. Residues 228–248 (LFGISFYLLSLKWFAISAICL) form a helical membrane-spanning segment. Positions 260-264 (HDAGH) match the Histidine box-1 motif. Residues 273–293 (VDNIIGMTVASWIGGLSLGWW) traverse the membrane as a helical segment. The short motif at 297 to 301 (HDVHH) is the Histidine box-2 element. The next 3 helical transmembrane spans lie at 353–372 (YLYYPILCFGRFNLYRLSWM), 393–413 (LAELSFFNYWFFYLIIYKQMP), and 422–442 (VMISHIATMIVHVQITLSHFA). Residues 481–485 (QVIHH) carry the Histidine box-3 motif.

This sequence belongs to the fatty acid desaturase type 1 family.

It is found in the membrane. It carries out the reaction an N-acylsphing-4-enine + 2 Fe(II)-[cytochrome b5] + O2 + 2 H(+) = a (4E,8E)-4-sphinga-4,8-dienine ceramide + 2 Fe(III)-[cytochrome b5] + 2 H2O. It participates in lipid metabolism; sphingolipid metabolism. Functionally, delta(8)-fatty-acid desaturase which introduces a double bond at the 8-position in the long-chain base (LCB) of ceramides. Required for the formation of the di-unsaturated sphingoid base (E,E)-sphinga-4,8-dienine during glucosylceramide (GluCer) biosynthesis. The protein is Delta 8-(E)-sphingolipid desaturase of Kluyveromyces lactis (Yeast).